We begin with the raw amino-acid sequence, 171 residues long: Lipoprotein signal peptidase (171 aa).

The next 3 membrane-spanning stretches (helical) occupy residues 7–27, 64–84, and 88–108; these read GLIA…WLYF, LGRW…SVWM, and GSRL…GNAI. Catalysis depends on residues Asp-118 and Asp-136. Residues 128 to 148 traverse the membrane as a helical segment; it reads SWYVFNVADAAIVAGVVGLIL.

The protein belongs to the peptidase A8 family.

The protein localises to the cell inner membrane. The catalysed reaction is Release of signal peptides from bacterial membrane prolipoproteins. Hydrolyzes -Xaa-Yaa-Zaa-|-(S,diacylglyceryl)Cys-, in which Xaa is hydrophobic (preferably Leu), and Yaa (Ala or Ser) and Zaa (Gly or Ala) have small, neutral side chains.. It functions in the pathway protein modification; lipoprotein biosynthesis (signal peptide cleavage). This protein specifically catalyzes the removal of signal peptides from prolipoproteins. This is Lipoprotein signal peptidase from Methylorubrum extorquens (strain PA1) (Methylobacterium extorquens).